The sequence spans 166 residues: Large ribosomal subunit protein uL10 (166 aa).

This sequence belongs to the universal ribosomal protein uL10 family. As to quaternary structure, part of the ribosomal stalk of the 50S ribosomal subunit. The N-terminus interacts with L11 and the large rRNA to form the base of the stalk. The C-terminus forms an elongated spine to which L12 dimers bind in a sequential fashion forming a multimeric L10(L12)X complex.

Its function is as follows. Forms part of the ribosomal stalk, playing a central role in the interaction of the ribosome with GTP-bound translation factors. The chain is Large ribosomal subunit protein uL10 from Oceanobacillus iheyensis (strain DSM 14371 / CIP 107618 / JCM 11309 / KCTC 3954 / HTE831).